The primary structure comprises 505 residues: Catalase (505 aa).

Residues 1–25 (MSRQDKKLTGVFGHPVSDRENSMTA) form a disordered region. Catalysis depends on residues His-56 and Asn-129. Tyr-339 contributes to the heme binding site.

It belongs to the catalase family. Homodimer. It depends on heme as a cofactor.

The enzyme catalyses 2 H2O2 = O2 + 2 H2O. Functionally, decomposes hydrogen peroxide into water and oxygen; serves to protect cells from the toxic effects of hydrogen peroxide. This is Catalase (katA) from Staphylococcus aureus (strain MRSA252).